The following is a 211-amino-acid chain: MIIGLTGSIGMGKSTLARMARRLGVAVHDADATVHALLGRRGAAVAAVLAAFPGVGTLTEGIDRKALGARVFGRPPALARLEAILHPLVRRREAAFLRCCGLGRRKVVILDVPLLFETGGEHRCDRVMVVSAPAFLQSQRVLRRPGMTAALLADIRARQTPEVVKRLNAEAVVPTGLGPRPALRALRANLTMARSGVRRWRRGKRTYRPHA.

A DPCK domain is found at 2–204; that stretch reads IIGLTGSIGM…SGVRRWRRGK (203 aa). An ATP-binding site is contributed by 10–15; the sequence is GMGKST.

Belongs to the CoaE family.

It localises to the cytoplasm. The enzyme catalyses 3'-dephospho-CoA + ATP = ADP + CoA + H(+). It participates in cofactor biosynthesis; coenzyme A biosynthesis; CoA from (R)-pantothenate: step 5/5. In terms of biological role, catalyzes the phosphorylation of the 3'-hydroxyl group of dephosphocoenzyme A to form coenzyme A. This Rhodospirillum rubrum (strain ATCC 11170 / ATH 1.1.1 / DSM 467 / LMG 4362 / NCIMB 8255 / S1) protein is Dephospho-CoA kinase.